A 140-amino-acid polypeptide reads, in one-letter code: Small ribosomal subunit protein uS19 (140 aa).

A disordered region spans residues 43–71; the sequence is IERGLTTEQQKLRETVRDADPQKTANDPI. A compositionally biased stretch (basic and acidic residues) spans 52-63; that stretch reads QKLRETVRDADP.

It belongs to the universal ribosomal protein uS19 family.

Functionally, protein S19 forms a complex with S13 that binds strongly to the 16S ribosomal RNA. The polypeptide is Small ribosomal subunit protein uS19 (Haloquadratum walsbyi (strain DSM 16790 / HBSQ001)).